A 142-amino-acid chain; its full sequence is Hemoglobin subunit alpha-1 (142 aa).

Ser-1 bears the N-acetylserine mark. One can recognise a Globin domain in the interval 1 to 142; the sequence is SLSDKDKAAV…VALALAERYR (142 aa). His-59 contributes to the O2 binding site. A heme b-binding site is contributed by His-88.

Belongs to the globin family. In terms of assembly, hb1 is a heterotetramer of two alpha-1 chains and two beta chains. HbC is a heterotetramer of two alpha-1 chains and two beta-C chains. In terms of tissue distribution, red blood cells.

Functionally, involved in oxygen transport from gills to the various peripheral tissues. This chain is Hemoglobin subunit alpha-1 (hba1), found in Trematomus newnesi (Dusky notothen).